Consider the following 107-residue polypeptide: ATP-dependent Clp protease adapter protein ClpS (107 aa).

Residues Met-1–Asp-12 are compositionally biased toward basic and acidic residues. The segment at Met-1–Pro-21 is disordered.

It belongs to the ClpS family. As to quaternary structure, binds to the N-terminal domain of the chaperone ClpA.

Its function is as follows. Involved in the modulation of the specificity of the ClpAP-mediated ATP-dependent protein degradation. This Zymomonas mobilis subsp. mobilis (strain ATCC 31821 / ZM4 / CP4) protein is ATP-dependent Clp protease adapter protein ClpS.